The chain runs to 335 residues: Ferredoxin--NADP reductase (335 aa).

Residues aspartate 34, glutamine 42, tyrosine 47, alanine 87, phenylalanine 121, aspartate 287, and threonine 328 each contribute to the FAD site.

The protein belongs to the ferredoxin--NADP reductase type 2 family. As to quaternary structure, homodimer. The cofactor is FAD.

The catalysed reaction is 2 reduced [2Fe-2S]-[ferredoxin] + NADP(+) + H(+) = 2 oxidized [2Fe-2S]-[ferredoxin] + NADPH. The chain is Ferredoxin--NADP reductase from Rickettsia felis (strain ATCC VR-1525 / URRWXCal2) (Rickettsia azadi).